A 93-amino-acid polypeptide reads, in one-letter code: MSETQNTQVTKRQRTLVGKVVSNKMDKTVVVLVERRVKHPIYGKIVMRSAKYKAHDESNQYNEGDTVEIAEGRPISRSKAWRVVRLVEAARII.

It belongs to the universal ribosomal protein uS17 family. As to quaternary structure, part of the 30S ribosomal subunit.

Functionally, one of the primary rRNA binding proteins, it binds specifically to the 5'-end of 16S ribosomal RNA. The protein is Small ribosomal subunit protein uS17 of Bordetella avium (strain 197N).